Consider the following 420-residue polypeptide: Cell division protein FtsA (420 aa).

This sequence belongs to the FtsA/MreB family. In terms of assembly, self-interacts. Interacts with FtsZ.

The protein localises to the cell inner membrane. Functionally, cell division protein that is involved in the assembly of the Z ring. May serve as a membrane anchor for the Z ring. The polypeptide is Cell division protein FtsA (Escherichia coli O157:H7).